Consider the following 1113-residue polypeptide: Antigenic protein P1 (1113 aa).

A helical transmembrane segment spans residues 7–27 (IIAVVAIASAIVTGVVVIVVV). Residues N121, N207, N225, N233, N274, N533, N576, N622, N675, N679, N730, N753, N880, N899, N907, N972, and N995 are each glycosylated (N-linked (GlcNAc...) asparagine). The Peptidase M60 domain occupies 159–473 (VFGQRAVAWA…SYVNMAHAFG (315 aa)). The PA14 domain occupies 648-800 (LDPHQVEYEV…TEESSVDVSK (153 aa)).

Its subcellular location is the membrane. The polypeptide is Antigenic protein P1 (Entamoeba histolytica (strain ATCC 30459 / HM-1:IMSS / ABRM)).